Consider the following 635-residue polypeptide: Probable ethylene response sensor 2 (635 aa).

The next 3 helical transmembrane spans lie at 24–44, 59–79, and 94–114; these read ISDFFIALAYFSIPLELIYFV, FGAFIVLCGATHLINLWTFAI, and ATAVVSCITALMLVHIIPDLL. 2 residues coordinate Cu cation: Cys66 and His70. One can recognise a GAF domain in the interval 159-308; sequence DRHTILRTTL…VVADQVAVAL (150 aa). Positions 351 to 589 constitute a Histidine kinase domain; the sequence is VMNHEMRTPM…MFFVKLGMPE (239 aa). His354 is subject to Phosphohistidine; by autocatalysis.

The protein belongs to the ethylene receptor family. In terms of assembly, homodimer. It depends on Cu cation as a cofactor.

The protein resides in the endoplasmic reticulum membrane. It catalyses the reaction ATP + protein L-histidine = ADP + protein N-phospho-L-histidine.. Ethylene receptor related to bacterial two-component regulators. Acts as a negative regulator of ethylene signaling. May play a role in the regulation of flowering by up-regulating GI (GIGANTEA) and RCN1 and regulate starch accumulation by down-regulating the alpha-amylase AMY3D. The sequence is that of Probable ethylene response sensor 2 (ERS2) from Oryza sativa subsp. japonica (Rice).